Here is a 298-residue protein sequence, read N- to C-terminus: Probable endonuclease 4 (298 aa).

Residues His-70, His-111, Glu-146, Asp-180, His-183, His-215, Asp-228, His-230, and Glu-260 each contribute to the Zn(2+) site.

This sequence belongs to the AP endonuclease 2 family. Zn(2+) is required as a cofactor.

It catalyses the reaction Endonucleolytic cleavage to 5'-phosphooligonucleotide end-products.. Its function is as follows. Endonuclease IV plays a role in DNA repair. It cleaves phosphodiester bonds at apurinic or apyrimidinic (AP) sites, generating a 3'-hydroxyl group and a 5'-terminal sugar phosphate. This is Probable endonuclease 4 from Halalkalibacterium halodurans (strain ATCC BAA-125 / DSM 18197 / FERM 7344 / JCM 9153 / C-125) (Bacillus halodurans).